The sequence spans 248 residues: NADP-dependent 3-hydroxy acid dehydrogenase YdfG (248 aa).

NADP(+) is bound by residues 7–12, 32–33, 54–55, and Asn81; these read GATAGF, RR, and DV. Ser134 is a binding site for substrate. Residues Tyr147, Lys151, and 177 to 185 contribute to the NADP(+) site; that span reads PGLVGGTEF. Catalysis depends on Tyr147, which acts as the Proton acceptor.

Belongs to the short-chain dehydrogenases/reductases (SDR) family. As to quaternary structure, homotetramer.

It catalyses the reaction 3-hydroxypropanoate + NADP(+) = 3-oxopropanoate + NADPH + H(+). It carries out the reaction L-allo-threonine + NADP(+) = aminoacetone + CO2 + NADPH. In terms of biological role, NADP-dependent dehydrogenase with broad substrate specificity acting on 3-hydroxy acids. Catalyzes the NADP-dependent oxidation of L-allo-threonine to L-2-amino-3-keto-butyrate, which is spontaneously decarboxylated into aminoacetone. Also acts on D-threonine, L-serine, D-serine, D-3-hydroxyisobutyrate, L-3-hydroxyisobutyrate, D-glycerate and L-glycerate. Able to catalyze the reduction of the malonic semialdehyde to 3-hydroxypropionic acid. YdfG is apparently supplementing RutE, the presumed malonic semialdehyde reductase involved in pyrimidine degradation since both are able to detoxify malonic semialdehyde. This chain is NADP-dependent 3-hydroxy acid dehydrogenase YdfG, found in Escherichia coli (strain K12).